We begin with the raw amino-acid sequence, 286 residues long: 2,3,4,5-tetrahydropyridine-2,6-dicarboxylate N-succinyltransferase (286 aa).

Substrate-binding residues include arginine 109 and aspartate 146.

This sequence belongs to the transferase hexapeptide repeat family. In terms of assembly, homotrimer.

Its subcellular location is the cytoplasm. It catalyses the reaction (S)-2,3,4,5-tetrahydrodipicolinate + succinyl-CoA + H2O = (S)-2-succinylamino-6-oxoheptanedioate + CoA. It participates in amino-acid biosynthesis; L-lysine biosynthesis via DAP pathway; LL-2,6-diaminopimelate from (S)-tetrahydrodipicolinate (succinylase route): step 1/3. The polypeptide is 2,3,4,5-tetrahydropyridine-2,6-dicarboxylate N-succinyltransferase (Bartonella tribocorum (strain CIP 105476 / IBS 506)).